A 64-amino-acid polypeptide reads, in one-letter code: Translation machinery-associated protein 7 homolog (64 aa).

Residues Met1 to Lys64 are disordered. A coiled-coil region spans residues Glu21–Gly50. Residues Lys32–Lys44 are compositionally biased toward basic and acidic residues.

This sequence belongs to the TMA7 family.

This is Translation machinery-associated protein 7 homolog from Anopheles gambiae (African malaria mosquito).